The sequence spans 61 residues: Large ribosomal subunit protein bL32 (61 aa).

This sequence belongs to the bacterial ribosomal protein bL32 family.

The sequence is that of Large ribosomal subunit protein bL32 from Phytoplasma mali (strain AT).